A 229-amino-acid polypeptide reads, in one-letter code: Peptidase E (229 aa).

Catalysis depends on charge relay system residues serine 120, aspartate 135, and histidine 157.

The protein belongs to the peptidase S51 family.

Its subcellular location is the cytoplasm. The enzyme catalyses Dipeptidase E catalyzes the hydrolysis of dipeptides Asp-|-Xaa. It does not act on peptides with N-terminal Glu, Asn or Gln, nor does it cleave isoaspartyl peptides.. Hydrolyzes dipeptides containing N-terminal aspartate residues. May play a role in allowing the cell to use peptide aspartate to spare carbon otherwise required for the synthesis of the aspartate family of amino acids. In Shigella flexneri serotype 5b (strain 8401), this protein is Peptidase E.